We begin with the raw amino-acid sequence, 1500 residues long: MDPSMGVNSVTISVEGMTCNSCVWTIEQQIGKVNGVHHIKVSLEEKNATIIYDPKLQTPKTLQEAIDDMGFDAVIHNPDPLPVLTDTLFLTVTASLTLPWDHIQSTLLKTKGVTDIKIYPQKRTVAVTIIPSIVNANQIKELVPELSLDTGTLEKKSGACEDHSMAQAGEVVLKMKVEGMTCHSCTSTIEGKIGKLQGVQRIKVSLDNQEATIVYQPHLISVEEMKKQIEAMGFPAFVKKQPKYLKLGAIDVERLKNTPVKSSEGSQQRSPSYTNDSTATFIIDGMHCKSCVSNIESTLSALQYVSSIVVSLENRSAIVKYNASSVTPESLRKAIEAVSPGLYRVSITSEVESTSNSPSSSSLQKIPLNVVSQPLTQETVINIDGMTCNSCVQSIEGVISKKPGVKSIRVSLANSNGTVEYDPLLTSPETLRGAIEDMGFDATLSDTNEPLVVIAQPSSEMPLLTSTNEFYTKGMTPVQDKEEGKNSSKCYIQVTGMTCASCVANIERNLRREEGIYSILVALMAGKAEVRYNPAVIQPPMIAEFIRELGFGATVIENADEGDGVLELVVRGMTCASCVHKIESSLTKHRGILYCSVALATNKAHIKYDPEIIGPRDIIHTIESLGFEASLVKKDRSASHLDHKREIRQWRRSFLVSLFFCIPVMGLMIYMMVMDHHFATLHHNQNMSKEEMINLHSSMFLERQILPGLSVMNLLSFLLCVPVQFFGGWYFYIQAYKALKHKTANMDVLIVLATTIAFAYSLIILLVAMYERAKVNPITFFDTPPMLFVFIALGRWLEHIAKGKTSEALAKLISLQATEATIVTLDSDNILLSEEQVDVELVQRGDIIKVVPGGKFPVDGRVIEGHSMVDESLITGEAMPVAKKPGSTVIAGSINQNGSLLICATHVGADTTLSQIVKLVEEAQTSKAPIQQFADKLSGYFVPFIVFVSIATLLVWIVIGFLNFEIVETYFPGYNRSISRTETIIRFAFQASITVLCIACPCSLGLATPTAVMVGTGVGAQNGILIKGGEPLEMAHKVKVVVFDKTGTITHGTPVVNQVKVLTESNRISHHKILAIVGTAESNSEHPLGTAITKYCKQELDTETLGTCIDFQVVPGCGISCKVTNIEGLLHKNNWNIEDNNIKNASLVQIDASNEQSSTSSSMIIDAQISNALNAQQYKVLIGNREWMIRNGLVINNDVNDFMTEHERKGRTAVLVAVDDELCGLIAIADTVKPEAELAIHILKSMGLEVVLMTGDNSKTARSIASQVGITKVFAEVLPSHKVAKVKQLQEEGKRVAMVGDGINDSPALAMANVGIAIGTGTDVAIEAADVVLIRNDLLDVVASIDLSRKTVKRIRINFVFALIYNLVGIPIAAGVFMPIGLVLQPWMGSAAMAASSVSVVLSSLFLKLYRKPTYESYELPARSQIGQKSPSEISVHVGIDDTSRNSPKLGLLDRIVNYSRASINSLLSDKRSLNSVVTSEPDKHSLLVGDFREDDDTAL.

Residues 1–653 (MDPSMGVNSV…KREIRQWRRS (653 aa)) are Cytoplasmic-facing. 2 consecutive HMA domains span residues 8–74 (NSVT…FDAV) and 85–151 (TDTL…LDTG). T18, C19, and C22 together coordinate Cu(+). T152 is subject to Phosphothreonine. The 67-residue stretch at 171 to 237 (VVLKMKVEGM…QIEAMGFPAF (67 aa)) folds into the HMA 3 domain. The Cu(+) site is built by C182 and C185. Position 270 is a phosphoserine (S270). The HMA 4 domain occupies 277–343 (STATFIIDGM…AIEAVSPGLY (67 aa)). Residues C288 and C291 each contribute to the Cu(+) site. T327 carries the phosphothreonine modification. S339, S353, S357, and S362 each carry phosphoserine. HMA domains lie at 377-443 (QETV…FDAT), 488-554 (SKCY…FGAT), and 564-630 (GVLE…FEAS). 6 residues coordinate Cu(+): C388, C391, C499, C502, C575, and C578. The helical transmembrane segment at 654 to 675 (FLVSLFFCIPVMGLMIYMMVMD) threads the bilayer. Residues 676-714 (HHFATLHHNQNMSKEEMINLHSSMFLERQILPGLSVMNL) are Extracellular-facing. A glycan (N-linked (GlcNAc...) asparagine) is linked at N686. The chain crosses the membrane as a helical span at residues 715–734 (LSFLLCVPVQFFGGWYFYIQ). The Cytoplasmic portion of the chain corresponds to 735–741 (AYKALKH). The chain crosses the membrane as a helical span at residues 742–762 (KTANMDVLIVLATTIAFAYSL). The Extracellular portion of the chain corresponds to 763-781 (IILLVAMYERAKVNPITFF). A helical transmembrane segment spans residues 782–802 (DTPPMLFVFIALGRWLEHIAK). Topologically, residues 803 to 936 (GKTSEALAKL…KAPIQQFADK (134 aa)) are cytoplasmic. The helical transmembrane segment at 937–959 (LSGYFVPFIVFVSIATLLVWIVI) threads the bilayer. Over 960–989 (GFLNFEIVETYFPGYNRSISRTETIIRFAF) the chain is Extracellular. N975 carries an N-linked (GlcNAc...) asparagine glycan. The helical transmembrane segment at 990–1011 (QASITVLCIACPCSLGLATPTA) threads the bilayer. At 1012 to 1356 (VMVGTGVGAQ…LSRKTVKRIR (345 aa)) the chain is on the cytoplasmic side. D1044 acts as the 4-aspartylphosphate intermediate in catalysis. E1081 is an ATP binding site. T1212 is subject to Phosphothreonine. Mg(2+) is bound by residues D1301 and D1305. A helical membrane pass occupies residues 1357-1374 (INFVFALIYNLVGIPIAA). Over 1375–1385 (GVFMPIGLVLQ) the chain is Extracellular. A helical membrane pass occupies residues 1386–1405 (PWMGSAAMAASSVSVVLSSL). Over 1406–1500 (FLKLYRKPTY…DFREDDDTAL (95 aa)) the chain is Cytoplasmic. Phosphoserine is present on residues S1430, S1432, S1460, S1463, and S1466. An Endocytosis signal motif is present at residues 1467-1468 (LL). A phosphoserine mark is found at S1469, S1473, S1476, and S1486. The PDZD11-binding stretch occupies residues 1486–1500 (SLLVGDFREDDDTAL). The Endocytosis signal motif lies at 1487-1488 (LL).

This sequence belongs to the cation transport ATPase (P-type) (TC 3.A.3) family. Type IB subfamily. In terms of assembly, monomer. Interacts with PDZD11. Interacts with ATOX1 and COMMD1. Interacts with TYRP1. Directly interacts with SOD3; this interaction is copper-dependent and is required for SOD3 activity. In terms of tissue distribution, widely expressed including in heart, brain, lung, muscle, kidney, pancreas, and to a lesser extent placenta. Expressed in fibroblasts, aortic smooth muscle cells, aortic endothelial cells and umbilical vein endothelial cells (at protein level). As to expression, expressed in cerebellum and brain cortex.

It localises to the golgi apparatus. Its subcellular location is the trans-Golgi network membrane. The protein localises to the cell membrane. The protein resides in the melanosome membrane. It is found in the early endosome membrane. It localises to the cell projection. Its subcellular location is the axon. The protein localises to the dendrite. The protein resides in the postsynaptic density. It is found in the cytoplasm. It localises to the cytosol. Its subcellular location is the endoplasmic reticulum. The catalysed reaction is Cu(+)(in) + ATP + H2O = Cu(+)(out) + ADP + phosphate + H(+). In terms of biological role, ATP-driven copper (Cu(+)) ion pump that plays an important role in intracellular copper ion homeostasis. Within a catalytic cycle, acquires Cu(+) ion from donor protein on the cytoplasmic side of the membrane and delivers it to acceptor protein on the lumenal side. The transfer of Cu(+) ion across the membrane is coupled to ATP hydrolysis and is associated with a transient phosphorylation that shifts the pump conformation from inward-facing to outward-facing state. Under physiological conditions, at low cytosolic copper concentration, it is localized at the trans-Golgi network (TGN) where it transfers Cu(+) ions to cuproenzymes of the secretory pathway. Upon elevated cytosolic copper concentrations, it relocalizes to the plasma membrane where it is responsible for the export of excess Cu(+) ions. May play a dual role in neuron function and survival by regulating cooper efflux and neuronal transmission at the synapse as well as by supplying Cu(+) ions to enzymes such as PAM, TYR and SOD3. In the melanosomes of pigmented cells, provides copper cofactor to TYR to form an active TYR holoenzyme for melanin biosynthesis. The chain is Copper-transporting ATPase 1 from Homo sapiens (Human).